Reading from the N-terminus, the 192-residue chain is Leucine-rich repeat-containing protein 51 (192 aa).

LRR repeat units follow at residues 49-71, 80-101, and 103-124; these read SLTQSLWLNNNVLNDLKDFNQVV, NLAWIDLSFNDLTTIDPVLTTF, and NLSVLYLHGNSIHRLGEVNKLA. Positions 137–175 constitute an LRRCT domain; the sequence is NPIEEEKGYRQYVLCNLPRITTFDFSGVTKADRSTAEVW.

Its subcellular location is the cytoplasm. The sequence is that of Leucine-rich repeat-containing protein 51 from Rattus norvegicus (Rat).